A 336-amino-acid polypeptide reads, in one-letter code: Eukaryotic translation initiation factor 3 subunit H (336 aa).

Positions 21 to 154 (VQCDGLAAMK…LKAYRLTPQA (134 aa)) constitute an MPN domain.

This sequence belongs to the eIF-3 subunit H family. Component of the eukaryotic translation initiation factor 3 (eIF-3) complex.

It localises to the cytoplasm. Component of the eukaryotic translation initiation factor 3 (eIF-3) complex, which is involved in protein synthesis of a specialized repertoire of mRNAs and, together with other initiation factors, stimulates binding of mRNA and methionyl-tRNAi to the 40S ribosome. The eIF-3 complex specifically targets and initiates translation of a subset of mRNAs involved in cell proliferation. In Aedes aegypti (Yellowfever mosquito), this protein is Eukaryotic translation initiation factor 3 subunit H.